Reading from the N-terminus, the 251-residue chain is HTH-type transcriptional regulator IolR (251 aa).

One can recognise an HTH deoR-type domain in the interval 1-57; that stretch reads MKLMRIQEMEEYILSHGTVSLDELCQVFNVSKNTVRRDINKLTEKGAIEKVYGGVTS. The segment at residues 19-38 is a DNA-binding region (H-T-H motif); it reads VSLDELCQVFNVSKNTVRRD.

Functionally, iol operon repressor. This is HTH-type transcriptional regulator IolR (iolR) from Bacillus subtilis (strain 168).